Consider the following 314-residue polypeptide: Putative S-adenosyl-L-methionine-dependent methyltransferase MMAR_5323 (314 aa).

S-adenosyl-L-methionine is bound by residues Asp-132 and 161–162 (DL).

The protein belongs to the UPF0677 family.

Functionally, exhibits S-adenosyl-L-methionine-dependent methyltransferase activity. In Mycobacterium marinum (strain ATCC BAA-535 / M), this protein is Putative S-adenosyl-L-methionine-dependent methyltransferase MMAR_5323.